The following is a 217-amino-acid chain: Thymidylate kinase (217 aa).

7–14 (GIEGAGKS) is an ATP binding site.

The protein belongs to the thymidylate kinase family.

It catalyses the reaction dTMP + ATP = dTDP + ADP. Its function is as follows. Phosphorylation of dTMP to form dTDP in both de novo and salvage pathways of dTTP synthesis. This is Thymidylate kinase from Desulfovibrio desulfuricans (strain ATCC 27774 / DSM 6949 / MB).